The sequence spans 127 residues: Fluoride-specific ion channel FluC (127 aa).

Helical transmembrane passes span 4–24 (SLLAIGLGAMVGAWLRWGLGM), 35–55 (PGTLLANLIGGYIIGLAIAFF), 68–88 (LLITGFCGGLTTFSTFSAEVV), and 96–116 (ILWALGSIALHVSGSLLMTAA). Residues Gly75 and Thr78 each contribute to the Na(+) site.

It belongs to the fluoride channel Fluc/FEX (TC 1.A.43) family.

The protein resides in the cell inner membrane. It carries out the reaction fluoride(in) = fluoride(out). Its activity is regulated as follows. Na(+) is not transported, but it plays an essential structural role and its presence is essential for fluoride channel function. Functionally, fluoride-specific ion channel. Important for reducing fluoride concentration in the cell, thus reducing its toxicity. In Pseudomonas putida (strain W619), this protein is Fluoride-specific ion channel FluC.